Reading from the N-terminus, the 81-residue chain is Cell division protein ZapB (81 aa).

Residues 5-81 (LEVFEKLEAK…QALLGRMEEV (77 aa)) are a coiled coil. An N6-acetyllysine modification is found at lysine 10. The segment at 36–67 (NNSLSQEVQNAQHQREELERENNHLKEQQNGW) is disordered. The segment covering 37-47 (NSLSQEVQNAQ) has biased composition (polar residues). A compositionally biased stretch (basic and acidic residues) spans 48-62 (HQREELERENNHLKE).

The protein belongs to the ZapB family. Homodimer. The ends of the coiled-coil dimer bind to each other, forming polymers. Interacts with FtsZ.

Its subcellular location is the cytoplasm. Functionally, non-essential, abundant cell division factor that is required for proper Z-ring formation. It is recruited early to the divisome by direct interaction with FtsZ, stimulating Z-ring assembly and thereby promoting cell division earlier in the cell cycle. Its recruitment to the Z-ring requires functional FtsA or ZipA. The polypeptide is Cell division protein ZapB (Shigella boydii serotype 4 (strain Sb227)).